The sequence spans 280 residues: MRHTLPIAPQFYVTAPQSCPYLEGRLERKLFTALQGEHAQKLNDTLSKQGFRRSQNVLYRPSCAECSACLSARIRVADFEPTRTQRRVMKRNADLRRNATSPWATEDQYALFRRYLDDRHADGGMADMDIFEFAAMIEETPIRSRVIEYSRPGDTPSNRPLSAVCLTDIFDDGLSMVYSFYDPDLAGRSLGAYVILDHIEIAREAGLPYVYLGYWVPGSRKMGYKASYSALEIYKGGRWQDIGQPSDHRAELHPLSVDPIAEQVARISLPEARSGDRSRD.

The protein belongs to the R-transferase family. Bpt subfamily.

It is found in the cytoplasm. It carries out the reaction N-terminal L-glutamyl-[protein] + L-leucyl-tRNA(Leu) = N-terminal L-leucyl-L-glutamyl-[protein] + tRNA(Leu) + H(+). It catalyses the reaction N-terminal L-aspartyl-[protein] + L-leucyl-tRNA(Leu) = N-terminal L-leucyl-L-aspartyl-[protein] + tRNA(Leu) + H(+). Its function is as follows. Functions in the N-end rule pathway of protein degradation where it conjugates Leu from its aminoacyl-tRNA to the N-termini of proteins containing an N-terminal aspartate or glutamate. The polypeptide is Aspartate/glutamate leucyltransferase (Cereibacter sphaeroides (strain KD131 / KCTC 12085) (Rhodobacter sphaeroides)).